The primary structure comprises 109 residues: uncharacterized protein (109 aa).

The next 3 membrane-spanning stretches (helical) occupy residues 16-36 (HPHLGISFIGCLLAITLEIYF), 52-72 (LIVLLVINMVTIPVVMALIAL), and 87-107 (ILLCLLSCILTIAGLFIAYPV).

The protein resides in the cell membrane. This is an uncharacterized protein from Salmonella typhimurium (strain LT2 / SGSC1412 / ATCC 700720).